The sequence spans 144 residues: Endoribonuclease YbeY (144 aa).

Positions 104, 108, and 114 each coordinate Zn(2+).

Belongs to the endoribonuclease YbeY family. The cofactor is Zn(2+).

The protein resides in the cytoplasm. Single strand-specific metallo-endoribonuclease involved in late-stage 70S ribosome quality control and in maturation of the 3' terminus of the 16S rRNA. This Nitratiruptor sp. (strain SB155-2) protein is Endoribonuclease YbeY.